We begin with the raw amino-acid sequence, 317 residues long: D-alanine--D-alanine ligase (317 aa).

Residues 104–303 (KRVWLQHGLP…YAELCVAILA (200 aa)) enclose the ATP-grasp domain. 130 to 185 (PDRLGLPLILKPPHEGSTVGITKVAACADMEQAYAAASHFDEVVLAEQFVRGRELT) serves as a coordination point for ATP. Residues aspartate 257, glutamate 270, and asparagine 272 each contribute to the Mg(2+) site.

It belongs to the D-alanine--D-alanine ligase family. Mg(2+) serves as cofactor. The cofactor is Mn(2+).

It is found in the cytoplasm. It carries out the reaction 2 D-alanine + ATP = D-alanyl-D-alanine + ADP + phosphate + H(+). It functions in the pathway cell wall biogenesis; peptidoglycan biosynthesis. Functionally, cell wall formation. This Bordetella avium (strain 197N) protein is D-alanine--D-alanine ligase.